The primary structure comprises 232 residues: tRNA (guanine-N(1)-)-methyltransferase (232 aa).

S-adenosyl-L-methionine-binding positions include Gly114 and 134–139; that span reads IGDYIL.

The protein belongs to the RNA methyltransferase TrmD family. As to quaternary structure, homodimer.

Its subcellular location is the cytoplasm. It catalyses the reaction guanosine(37) in tRNA + S-adenosyl-L-methionine = N(1)-methylguanosine(37) in tRNA + S-adenosyl-L-homocysteine + H(+). Its function is as follows. Specifically methylates guanosine-37 in various tRNAs. This chain is tRNA (guanine-N(1)-)-methyltransferase, found in Wolbachia pipientis subsp. Culex pipiens (strain wPip).